The chain runs to 230 residues: Urease accessory protein UreF (230 aa).

Belongs to the UreF family. In terms of assembly, ureD, UreF and UreG form a complex that acts as a GTP-hydrolysis-dependent molecular chaperone, activating the urease apoprotein by helping to assemble the nickel containing metallocenter of UreC. The UreE protein probably delivers the nickel.

It is found in the cytoplasm. In terms of biological role, required for maturation of urease via the functional incorporation of the urease nickel metallocenter. The protein is Urease accessory protein UreF of Polynucleobacter asymbioticus (strain DSM 18221 / CIP 109841 / QLW-P1DMWA-1) (Polynucleobacter necessarius subsp. asymbioticus).